The chain runs to 339 residues: Replication factor C subunit 4 (339 aa).

49-56 serves as a coordination point for ATP; the sequence is GPPGTGKT.

This sequence belongs to the activator 1 small subunits family. In terms of assembly, heterotetramer of subunits RFC2, RFC3, RFC4 and RFC5 that can form a complex with RFC1.

It is found in the nucleus. Functionally, may be involved in DNA replication and thus regulate cell proliferation. In Arabidopsis thaliana (Mouse-ear cress), this protein is Replication factor C subunit 4 (RFC4).